The following is a 298-amino-acid chain: MTVSTPSKPHICRFPPGADPDVINQAFREDGVVILEGFLTPAQVDKVNCEMKPHLAKVRGGNMRYGPMDTSLETTLEPERRRIHNLAGLSETFRQDILNHPLMHELSRRVFSEFGDYWQYAGSVIDCAPGTPDQFLHRDQPAQKLFNVGPDAPEGFINFLTALTDFTKTNGATRFVWGSHRDWIDKSDENHPIVVAEVKAGDSLFFSGKIVHGGSFNGTNDTYRSSVALPIVPCIMTPYEANIHIPRSTVETMTPLAQRMIGWRSACLPDPYAIGTWTLNMNELGEQMGLKSKGYLEN.

Residues His-137, Asp-139, and His-212 each coordinate Fe cation.

Belongs to the PhyH family. Homodimer. The cofactor is Fe cation.

The enzyme catalyses fumigatonoid C + 2-oxoglutarate + O2 = novofumigatonin + succinate + CO2 + H2O. It functions in the pathway secondary metabolite biosynthesis; terpenoid biosynthesis. In terms of biological role, fe(II)/2-oxoglutarate-dependent dioxygenase; part of the gene cluster that mediates the biosynthesis of novofumigatonin, a heavily oxygenated meroterpenoid containing a unique orthoester moiety. The first step of the pathway is the synthesis of 3,5-dimethylorsellinic acid (DMOA) by the polyketide synthase nvfA via condensation of one acetyl-CoA starter unit with 3 malonyl-CoA units and 2 methylations. DMOA is then converted to farnesyl-DMOA by the farnesyltransferase nvfB. Epoxydation by FAD-dependent monooxygenase nvfK, followed by a protonation-initiated cyclization catalyzed by the terpene cyclase nvfL leads to the production of asnavolin H. The short chain dehydrogenase nvfC then as a 3-OH dehydrogenase of asnovolin H to yield chemesin D. There are two branches to synthesize asnovolin A from chemesin D. In one branch, chemesin D undergoes Baeyer-Villiger oxidation by nvfH, methylation by nvfJ, and enoyl reduction by the nvfM D enoylreductase that reduces the double bond between C-5'and C-6', to form respectively asnovolin I, asnovolin K, and asnovolin A. In the other branch, the methylation precedes the Baeyer-Villiger oxidation and the enoyl reduction to yield asnovolin A via the asnovolin J intermediate. Asnovolin A is further converted to fumigatonoid A by the Fe(II)/2-oxoglutarate-dependent dioxygenase nvfI that catalyzes an endoperoxidation reaction. The alpha/beta hydrolase nvfD then acts as an epimerase that converts fumigatonoid A to its C-5' epimer, which then undergoes spontaneous or nvfD-catalyzed lactonization. The following step utilizes the ketoreductase nvfG to produce fumigatonoid B. The dioxygenase nvfE further converts fumigatonoid B into fumigatonoid C. Finally the Fe(II)/2-oxoglutarate-dependent dioxygenase nvfF catalyzes two rounds of oxidation to transform fumigatonoid C into the end product, novofumigatonin A. In Aspergillus novofumigatus (strain IBT 16806), this protein is Fe(II)/2-oxoglutarate-dependent dioxygenase nvfF.